The sequence spans 163 residues: Large ribosomal subunit protein bL17 (163 aa).

The disordered stretch occupies residues Val-127–Glu-163. Positions Lys-129–Lys-138 are enriched in basic residues. Low complexity predominate over residues Glu-142–Thr-154.

It belongs to the bacterial ribosomal protein bL17 family. In terms of assembly, part of the 50S ribosomal subunit. Contacts protein L32.

This is Large ribosomal subunit protein bL17 from Bacteroides thetaiotaomicron (strain ATCC 29148 / DSM 2079 / JCM 5827 / CCUG 10774 / NCTC 10582 / VPI-5482 / E50).